Consider the following 454-residue polypeptide: tRNA(Ile)-lysidine synthase (454 aa).

31–36 (SGGADS) provides a ligand contact to ATP.

Belongs to the tRNA(Ile)-lysidine synthase family.

It is found in the cytoplasm. The enzyme catalyses cytidine(34) in tRNA(Ile2) + L-lysine + ATP = lysidine(34) in tRNA(Ile2) + AMP + diphosphate + H(+). Functionally, ligates lysine onto the cytidine present at position 34 of the AUA codon-specific tRNA(Ile) that contains the anticodon CAU, in an ATP-dependent manner. Cytidine is converted to lysidine, thus changing the amino acid specificity of the tRNA from methionine to isoleucine. This Porphyromonas gingivalis (strain ATCC BAA-308 / W83) protein is tRNA(Ile)-lysidine synthase.